The following is a 262-amino-acid chain: Hydroxyethylthiazole kinase (262 aa).

Position 43 (methionine 43) interacts with substrate. 2 residues coordinate ATP: arginine 118 and threonine 164. Alanine 191 is a binding site for substrate.

The protein belongs to the Thz kinase family. Mg(2+) serves as cofactor.

The catalysed reaction is 5-(2-hydroxyethyl)-4-methylthiazole + ATP = 4-methyl-5-(2-phosphooxyethyl)-thiazole + ADP + H(+). The protein operates within cofactor biosynthesis; thiamine diphosphate biosynthesis; 4-methyl-5-(2-phosphoethyl)-thiazole from 5-(2-hydroxyethyl)-4-methylthiazole: step 1/1. Its function is as follows. Catalyzes the phosphorylation of the hydroxyl group of 4-methyl-5-beta-hydroxyethylthiazole (THZ). In Cereibacter sphaeroides (strain ATCC 17029 / ATH 2.4.9) (Rhodobacter sphaeroides), this protein is Hydroxyethylthiazole kinase.